Here is a 227-residue protein sequence, read N- to C-terminus: Cytochrome c oxidase subunit 2 (227 aa).

Topologically, residues M1–S14 are mitochondrial intermembrane. The chain crosses the membrane as a helical span at residues P15–M45. Over L46–Q59 the chain is Mitochondrial matrix. Residues E60 to M87 form a helical membrane-spanning segment. Residues D88–L227 lie on the Mitochondrial intermembrane side of the membrane. Cu cation-binding residues include H161, C196, E198, C200, H204, and M207. E198 is a binding site for Mg(2+). Y218 bears the Phosphotyrosine mark.

Belongs to the cytochrome c oxidase subunit 2 family. In terms of assembly, component of the cytochrome c oxidase (complex IV, CIV), a multisubunit enzyme composed of 14 subunits. The complex is composed of a catalytic core of 3 subunits MT-CO1, MT-CO2 and MT-CO3, encoded in the mitochondrial DNA, and 11 supernumerary subunits COX4I, COX5A, COX5B, COX6A, COX6B, COX6C, COX7A, COX7B, COX7C, COX8 and NDUFA4, which are encoded in the nuclear genome. The complex exists as a monomer or a dimer and forms supercomplexes (SCs) in the inner mitochondrial membrane with NADH-ubiquinone oxidoreductase (complex I, CI) and ubiquinol-cytochrome c oxidoreductase (cytochrome b-c1 complex, complex III, CIII), resulting in different assemblies (supercomplex SCI(1)III(2)IV(1) and megacomplex MCI(2)III(2)IV(2)). Found in a complex with TMEM177, COA6, COX18, COX20, SCO1 and SCO2. Interacts with TMEM177 in a COX20-dependent manner. Interacts with COX20. Interacts with COX16. Requires Cu cation as cofactor.

Its subcellular location is the mitochondrion inner membrane. The catalysed reaction is 4 Fe(II)-[cytochrome c] + O2 + 8 H(+)(in) = 4 Fe(III)-[cytochrome c] + 2 H2O + 4 H(+)(out). Functionally, component of the cytochrome c oxidase, the last enzyme in the mitochondrial electron transport chain which drives oxidative phosphorylation. The respiratory chain contains 3 multisubunit complexes succinate dehydrogenase (complex II, CII), ubiquinol-cytochrome c oxidoreductase (cytochrome b-c1 complex, complex III, CIII) and cytochrome c oxidase (complex IV, CIV), that cooperate to transfer electrons derived from NADH and succinate to molecular oxygen, creating an electrochemical gradient over the inner membrane that drives transmembrane transport and the ATP synthase. Cytochrome c oxidase is the component of the respiratory chain that catalyzes the reduction of oxygen to water. Electrons originating from reduced cytochrome c in the intermembrane space (IMS) are transferred via the dinuclear copper A center (CU(A)) of subunit 2 and heme A of subunit 1 to the active site in subunit 1, a binuclear center (BNC) formed by heme A3 and copper B (CU(B)). The BNC reduces molecular oxygen to 2 water molecules using 4 electrons from cytochrome c in the IMS and 4 protons from the mitochondrial matrix. This chain is Cytochrome c oxidase subunit 2 (MT-CO2), found in Rusa unicolor (Sambar).